Reading from the N-terminus, the 85-residue chain is V-type proton ATPase subunit f (85 aa).

Over 1 to 10 (MRPVVSTGKA) the chain is Lumenal. Residues 11-31 (WCCTVLSAFGVVILSVIAHLF) traverse the membrane as a helical segment. At 32-54 (NTNHESFVGSINDPEDGPAVAHT) the chain is on the cytoplasmic side. Residues 55–75 (VYLAALVYLVFFVFCGFQVYL) form a helical membrane-spanning segment. The Lumenal segment spans residues 76–85 (ARRKPSIELR).

V-ATPase is a heteromultimeric enzyme composed of a peripheral catalytic V1 complex (components A to H) attached to an integral membrane V0 proton pore complex (components: a, c, c', c'', d, e, f and VOA1).

It localises to the endoplasmic reticulum membrane. It is found in the vacuole membrane. Its function is as follows. Accessory component of the V0 complex of vacuolar(H+)-ATPase (V-ATPase), a multisubunit enzyme composed of a peripheral complex (V1) that hydrolyzes ATP and a membrane integral complex (V0) that translocates protons. V-ATPase is responsible for acidifying and maintaining the pH of intracellular compartments. The chain is V-type proton ATPase subunit f from Saccharomyces cerevisiae (strain ATCC 204508 / S288c) (Baker's yeast).